The chain runs to 309 residues: MDIQFLGTGAGQPSKARNVSSLALKLLDEINEVWLFDCGEGTQNRILETTIRPRKVSKIFITHLHGDHIFGLPGFLSSRAFQANEEQTDLEIYGPQGIKSFVLTSLRVSGSRLPYRIHFHEFDQDSLGKILETDKFTVYAEELDHTIFCVGYRVMQKDLEGTLDAEKLKAAGVPFGPLFGKIKNGQDLVLEDGTEIKAADYISAPRPGKIITILGDTRKTGASVRLAVNADVLVHESTYGKGDEKIARNHGHSTNMQAAQVAVEAGAKRLLLNHISARFLSKDISKLKKDAATIFENVHVVKDLEEVEI.

7 residues coordinate Zn(2+): H63, H65, D67, H68, H145, D216, and H274. D67 functions as the Proton acceptor in the catalytic mechanism.

Belongs to the RNase Z family. Homodimer. The cofactor is Zn(2+).

The enzyme catalyses Endonucleolytic cleavage of RNA, removing extra 3' nucleotides from tRNA precursor, generating 3' termini of tRNAs. A 3'-hydroxy group is left at the tRNA terminus and a 5'-phosphoryl group is left at the trailer molecule.. Zinc phosphodiesterase, which displays some tRNA 3'-processing endonuclease activity. Probably involved in tRNA maturation, by removing a 3'-trailer from precursor tRNA. This is Ribonuclease Z from Streptococcus pneumoniae serotype 2 (strain D39 / NCTC 7466).